The following is a 154-amino-acid chain: uncharacterized protein (154 aa).

It localises to the mitochondrion. This is an uncharacterized protein from Vicia faba (Broad bean).